The sequence spans 578 residues: Phosphoenolpyruvate-protein phosphotransferase (578 aa).

The active-site Tele-phosphohistidine intermediate is the histidine 195. The phosphoenolpyruvate site is built by arginine 302 and arginine 338. Glutamate 437 and aspartate 461 together coordinate Mg(2+). Phosphoenolpyruvate-binding positions include 460-461 (ND) and arginine 471. Cysteine 508 serves as the catalytic Proton donor.

Belongs to the PEP-utilizing enzyme family. Homodimer. Mg(2+) is required as a cofactor.

The protein localises to the cytoplasm. The catalysed reaction is L-histidyl-[protein] + phosphoenolpyruvate = N(pros)-phospho-L-histidyl-[protein] + pyruvate. General (non sugar-specific) component of the phosphoenolpyruvate-dependent sugar phosphotransferase system (sugar PTS). This major carbohydrate active-transport system catalyzes the phosphorylation of incoming sugar substrates concomitantly with their translocation across the cell membrane. Enzyme I transfers the phosphoryl group from phosphoenolpyruvate (PEP) to the phosphoryl carrier protein (HPr). In Bacillus sp. (strain S), this protein is Phosphoenolpyruvate-protein phosphotransferase (ptsI).